Here is a 678-residue protein sequence, read N- to C-terminus: Dihydroxyacetone phosphate acyltransferase (678 aa).

Residues Ser-12 and Ser-17 each carry the phosphoserine modification. The HXXXXD motif signature appears at 161–166 (HRSYID). Lys-641 is modified (N6-acetyllysine). The Microbody targeting signal motif lies at 676-678 (AKL).

The protein belongs to the GPAT/DAPAT family. In terms of assembly, part of a heterotrimeric complex composed of GNPAT, AGPS and a modified form of GNPAT. As to expression, highly expressed in liver and testis. Lower levels in heart, brain, lung and kidney. Detected in spleen.

The protein localises to the peroxisome membrane. It carries out the reaction dihydroxyacetone phosphate + an acyl-CoA = a 1-acylglycerone 3-phosphate + CoA. It catalyses the reaction dihydroxyacetone phosphate + hexadecanoyl-CoA = 1-hexadecanoylglycerone 3-phosphate + CoA. It functions in the pathway membrane lipid metabolism; glycerophospholipid metabolism. Its function is as follows. Dihydroxyacetonephosphate acyltransferase catalyzing the first step in the biosynthesis of plasmalogens, a subset of phospholipids that differ from other glycerolipids by having an alkyl chain attached through a vinyl ether linkage at the sn-1 position of the glycerol backbone, and which unique physical properties have an impact on various aspects of cell signaling and membrane biology. This chain is Dihydroxyacetone phosphate acyltransferase, found in Mus musculus (Mouse).